Here is a 355-residue protein sequence, read N- to C-terminus: UDP-N-acetylglucosamine--N-acetylmuramyl-(pentapeptide) pyrophosphoryl-undecaprenol N-acetylglucosamine transferase (355 aa).

UDP-N-acetyl-alpha-D-glucosamine contacts are provided by residues 14–16, asparagine 126, arginine 162, serine 190, isoleucine 243, 262–267, and glutamine 287; these read TGG and ALTVSE.

The protein belongs to the glycosyltransferase 28 family. MurG subfamily.

It is found in the cell inner membrane. The catalysed reaction is di-trans,octa-cis-undecaprenyl diphospho-N-acetyl-alpha-D-muramoyl-L-alanyl-D-glutamyl-meso-2,6-diaminopimeloyl-D-alanyl-D-alanine + UDP-N-acetyl-alpha-D-glucosamine = di-trans,octa-cis-undecaprenyl diphospho-[N-acetyl-alpha-D-glucosaminyl-(1-&gt;4)]-N-acetyl-alpha-D-muramoyl-L-alanyl-D-glutamyl-meso-2,6-diaminopimeloyl-D-alanyl-D-alanine + UDP + H(+). The protein operates within cell wall biogenesis; peptidoglycan biosynthesis. Cell wall formation. Catalyzes the transfer of a GlcNAc subunit on undecaprenyl-pyrophosphoryl-MurNAc-pentapeptide (lipid intermediate I) to form undecaprenyl-pyrophosphoryl-MurNAc-(pentapeptide)GlcNAc (lipid intermediate II). The polypeptide is UDP-N-acetylglucosamine--N-acetylmuramyl-(pentapeptide) pyrophosphoryl-undecaprenol N-acetylglucosamine transferase (Vibrio vulnificus (strain YJ016)).